A 374-amino-acid chain; its full sequence is tRNA-specific 2-thiouridylase MnmA (374 aa).

ATP-binding positions include 13–20 and Met39; that span reads GMSGGVDS. Residues 99–101 form an interaction with target base in tRNA region; sequence NPD. Cys104 (nucleophile) is an active-site residue. A disulfide bridge links Cys104 with Cys201. Gly128 is an ATP binding site. The segment at 151–153 is interaction with tRNA; sequence KDQ. Catalysis depends on Cys201, which acts as the Cysteine persulfide intermediate. Positions 313–314 are interaction with tRNA; it reads RY.

Belongs to the MnmA/TRMU family.

The protein resides in the cytoplasm. It catalyses the reaction S-sulfanyl-L-cysteinyl-[protein] + uridine(34) in tRNA + AH2 + ATP = 2-thiouridine(34) in tRNA + L-cysteinyl-[protein] + A + AMP + diphosphate + H(+). Functionally, catalyzes the 2-thiolation of uridine at the wobble position (U34) of tRNA, leading to the formation of s(2)U34. This chain is tRNA-specific 2-thiouridylase MnmA, found in Streptococcus equi subsp. equi (strain 4047).